Here is a 232-residue protein sequence, read N- to C-terminus: Putative N-acetylmannosamine-6-phosphate 2-epimerase (232 aa).

Belongs to the NanE family.

The enzyme catalyses an N-acyl-D-glucosamine 6-phosphate = an N-acyl-D-mannosamine 6-phosphate. It functions in the pathway amino-sugar metabolism; N-acetylneuraminate degradation; D-fructose 6-phosphate from N-acetylneuraminate: step 3/5. In terms of biological role, converts N-acetylmannosamine-6-phosphate (ManNAc-6-P) to N-acetylglucosamine-6-phosphate (GlcNAc-6-P). The protein is Putative N-acetylmannosamine-6-phosphate 2-epimerase of Corynebacterium glutamicum (strain R).